Reading from the N-terminus, the 66-residue chain is Large ribosomal subunit protein uL29 (66 aa).

It belongs to the universal ribosomal protein uL29 family.

This Syntrophobacter fumaroxidans (strain DSM 10017 / MPOB) protein is Large ribosomal subunit protein uL29.